Here is a 317-residue protein sequence, read N- to C-terminus: Iron-uptake system-binding protein (317 aa).

A signal peptide spans 1–19 (MKKISLTLLILLLALTAAA). A lipid anchor (N-palmitoyl cysteine) is attached at cysteine 20. Residue cysteine 20 is the site of S-diacylglycerol cysteine attachment. Positions 57–317 (IAITGSVESM…KAAAEKLTQN (261 aa)) constitute a Fe/B12 periplasmic-binding domain.

This sequence belongs to the bacterial solute-binding protein 8 family. As to quaternary structure, the complex is composed of one ATP-binding protein (YusV), two transmembrane proteins (FeuB and FeuC) and a solute-binding protein (FeuA).

Its subcellular location is the cell membrane. The protein resides in the cytoplasm. It is found in the membrane raft. In terms of biological role, involved in the uptake of iron. Functionally, part of the ABC transporter complex FeuABC/YusV involved in import of the catecholate siderophores bacillibactin and enterobactin. The sequence is that of Iron-uptake system-binding protein (feuA) from Bacillus subtilis (strain 168).